The primary structure comprises 202 residues: Solute carrier family 66 member 3 (202 aa).

Residues 1–19 (MEAGLLWFCNWSTLGVCAA) form the signal peptide. 4 helical membrane-spanning segments follow: residues 33-53 (SARG…LVFL), 64-84 (LTYL…LFVF), 94-114 (LPYM…KWII), and 171-191 (LTIL…TATV).

It is found in the membrane. The polypeptide is Solute carrier family 66 member 3 (Slc66a3) (Mus musculus (Mouse)).